We begin with the raw amino-acid sequence, 6733 residues long: Replicase polyprotein 1ab (6733 aa).

The Macro domain occupies 1633–1814 (FNQYYEFKVG…QYIEALGVVE (182 aa)). The interval 2183–2565 (LTHVNKFKIV…IMLPVFVIIL (383 aa)) is HD1. Helical transmembrane passes span 2191–2211 (IVVYLMVLWFVLLYCFSDFSL), 2219–2239 (VFLLWLSHVVLVVKKLDLGLV), 2266–2286 (GVHWLILKLLFYSFHFYDFFV), 2411–2431 (ALWFYVVFYSGFVSFWLPLMF), 2521–2541 (VAVSSLGFINPLMWPLFIVVL), 2546–2566 (FVWFFNVLSYIMLPVFVIILF), 2769–2789 (VMLIIALGAIFVFMYSCFMVG), 2937–2957 (IISPYVFVVLVAIFTIVFLFL), 2986–3006 (VLFVVCLPPLVPGVVFVLALW), and 3022–3042 (LFILPWFYVMLFVLIVGGFVF). The tract at residues 2769–3042 (VMLIIALGAI…FVLIVGGFVF (274 aa)) is HD2. Active-site charge relay system; for 3C-like serine proteinase activity residues include His-3184, Glu-3222, and Ser-3291. Helical transmembrane passes span 3422 to 3442 (SNVSWVVENLHFIFSVYFLVC), 3456 to 3478 (VVLPLFFVVQLLSTVVLKNVLFW), 3486 to 3506 (LAVTFYVHSEVAESMYLLGLF), 3514 to 3534 (VGLILVVSVMCLFVVVRVVVN), 3538 to 3558 (AIFVVVVSVLLIVVNVVLGVV), 3573 to 3593 (AVFAALLTPQPVVAIMMLILF), and 3598 to 3613 (LMSFAFVVIVLSFRVF). Residues 3430-3613 (NLHFIFSVYF…VVIVLSFRVF (184 aa)) are HD3. The region spanning 4442-4673 (DFKLLRDVWC…AKEMNVPADF (232 aa)) is the NiRAN domain. One can recognise a RdRp catalytic domain in the interval 4981 to 5132 (FDVFGSDYTK…FSKPGALKIF (152 aa)). The CV ZBD domain maps to 5289-5404 (FDRVCFCCPN…NGVAQLLTPV (116 aa)). Residues Cys-5293, Cys-5296, Cys-5304, Cys-5307, Cys-5314, Cys-5317, His-5321, His-5327, Cys-5336, Cys-5338, Cys-5359, and Cys-5362 each coordinate Zn(2+). Residues 5509–5688 (NQPWRLATCF…LQLATQKRYL (180 aa)) enclose the (+)RNA virus helicase ATP-binding domain. Residues 5689–5848 (TACYRCPPQI…FGMEKQSDFN (160 aa)) enclose the (+)RNA virus helicase C-terminal domain. One can recognise an ExoN domain in the interval 5846-6059 (DFNIIPEVAS…YLASYDAAFK (214 aa)). Catalysis depends on residues Asp-5860, Glu-5862, and Asp-5961. Residues His-6025, Cys-6029, and His-6033 each coordinate Zn(2+). Residues His-6037 and Asp-6042 contribute to the active site. Position 6048 (Cys-6048) interacts with Zn(2+). Residues 6327–6467 (LPETLFSTGR…GEDDIQTFYP (141 aa)) form the NendoU domain. Active-site residues include His-6363, His-6380, Lys-6412, Lys-6509, Asp-6585, Lys-6613, and Glu-6647. The region spanning 6469-6733 (KEFIRSYYEW…EVPLLCQMKH (265 aa)) is the Nidovirus-type SAM-dependent 2'-O-MTase domain.

In terms of processing, specific enzymatic cleavages in vivo by its own protease yield mature proteins. 3CL-PRO is autocatalytically processed.

Its subcellular location is the host membrane. The enzyme catalyses RNA(n) + a ribonucleoside 5'-triphosphate = RNA(n+1) + diphosphate. The catalysed reaction is ATP + H2O = ADP + phosphate + H(+). Its function is as follows. The 3C-like serine proteinase is responsible for the majority of cleavages. Functionally, the helicase which contains a zinc finger structure displays RNA and DNA duplex-unwinding activities with 5' to 3' polarity. In terms of biological role, acts on both ssRNA and dsRNA in a 3' to 5' direction. NendoU is a Mn(2+)-dependent, uridylate-specific enzyme, which leaves 2'-3'-cyclic phosphates 5' to the cleaved bond. The sequence is that of Replicase polyprotein 1ab (rep) from Bos taurus (Bovine).